A 421-amino-acid polypeptide reads, in one-letter code: UDP-N-acetylglucosamine 1-carboxyvinyltransferase (421 aa).

22–23 (KN) lines the phosphoenolpyruvate pocket. Arg93 lines the UDP-N-acetyl-alpha-D-glucosamine pocket. Cys117 (proton donor) is an active-site residue. Cys117 carries the 2-(S-cysteinyl)pyruvic acid O-phosphothioketal modification. UDP-N-acetyl-alpha-D-glucosamine contacts are provided by residues 122–126 (RPVDL), Asp308, and Ile330.

This sequence belongs to the EPSP synthase family. MurA subfamily.

It is found in the cytoplasm. The catalysed reaction is phosphoenolpyruvate + UDP-N-acetyl-alpha-D-glucosamine = UDP-N-acetyl-3-O-(1-carboxyvinyl)-alpha-D-glucosamine + phosphate. Its pathway is cell wall biogenesis; peptidoglycan biosynthesis. Functionally, cell wall formation. Adds enolpyruvyl to UDP-N-acetylglucosamine. The sequence is that of UDP-N-acetylglucosamine 1-carboxyvinyltransferase from Pseudomonas entomophila (strain L48).